We begin with the raw amino-acid sequence, 166 residues long: Urease accessory protein UreE 2 (166 aa).

Positions 135-154 are disordered; sequence EHGAYGGGHHHSRAGEEDFN.

Belongs to the UreE family.

It is found in the cytoplasm. Functionally, involved in urease metallocenter assembly. Binds nickel. Probably functions as a nickel donor during metallocenter assembly. In Pseudomonas syringae pv. syringae (strain B728a), this protein is Urease accessory protein UreE 2.